A 42-amino-acid chain; its full sequence is Crotamine-IV-3 (42 aa).

Intrachain disulfides connect cysteine 4/cysteine 37, cysteine 11/cysteine 31, and cysteine 19/cysteine 38.

It belongs to the crotamine-myotoxin family. As to quaternary structure, monomer. In terms of tissue distribution, expressed by the venom gland.

The protein localises to the secreted. Its function is as follows. Cationic peptide that possesses multiple functions. It acts as a cell-penetrating peptide (CPP), and as a potent voltage-gated potassium channel (Kv) inhibitor. It exhibits antimicrobial activities, and hind limb paralysis. It also induces potent blockade of neuromuscular transmission in young chicken biventer cervicis preparation and potent myotoxic effect. In mice, it induces myonecrosis, upon intramuscular or subcutaneous injections. The polypeptide is Crotamine-IV-3 (Crotalus durissus cumanensis (South American rattlesnake)).